A 631-amino-acid polypeptide reads, in one-letter code: Nucleoside triphosphatase I (631 aa).

A Helicase ATP-binding domain is found at 42 to 204 (FLGLDSMHSL…TMLVNLLRPG (163 aa)). ATP is bound at residue 55–62 (HETGVGKT). Residues 141–144 (DECH) carry the DEXH box motif. The region spanning 367-532 (KFIDVCLGIL…EFVQLFRVFK (166 aa)) is the Helicase C-terminal domain. The interval 457-524 (DIFILDMTWN…EIIQSKSKEF (68 aa)) is binding to the cap-specific mRNA (nucleoside-2'-O-)-methyltransferase.

Belongs to the helicase family. NPH I subfamily. Monomer. Interacts (via C-terminus) with RAP94/OPG109 (via N-terminus). Interacts with the cap-specific mRNA (nucleoside-2'-O-)-methyltransferase OPG102.

It is found in the virion. The catalysed reaction is a ribonucleoside 5'-triphosphate + H2O = a ribonucleoside 5'-diphosphate + phosphate + H(+). DNA-dependent ATPase that acts as a 5' to 3' translocase on single-stranded DNA and thereby plays a role in transcription termination of viral early genes. Uses forward translocation in concert with the viral RNA polymerase RAP94/OPG109 subunit and the capping enzyme/VTF to catalyze release of UUUUUNU-containing nascent RNA from the elongation complex. In addition, acts as a positive elongation factor to assist transcription through problematic sequences. The polypeptide is Nucleoside triphosphatase I (OPG123) (Variola virus (isolate Human/India/Ind3/1967) (VARV)).